The following is a 126-amino-acid chain: Fluoride-specific ion channel FluC (126 aa).

The next 4 membrane-spanning stretches (helical) occupy residues 4-24, 38-58, 71-91, and 104-124; these read FAILGFIALGGAFGACSRYLV, YGTLTVNVVGSFIMGLLIAAF, IIGLGFLGALTTFSTFSMDNV, and LNVVLNVTLSITAAWVGFQLL. Residues glycine 78 and threonine 81 each coordinate Na(+).

It belongs to the fluoride channel Fluc/FEX (TC 1.A.43) family.

The protein localises to the cell inner membrane. It carries out the reaction fluoride(in) = fluoride(out). With respect to regulation, na(+) is not transported, but it plays an essential structural role and its presence is essential for fluoride channel function. In terms of biological role, fluoride-specific ion channel. Important for reducing fluoride concentration in the cell, thus reducing its toxicity. The polypeptide is Fluoride-specific ion channel FluC (Vibrio vulnificus (strain CMCP6)).